A 273-amino-acid chain; its full sequence is Shikimate dehydrogenase (NADP(+)) (273 aa).

Shikimate-binding positions include 19-21 (SKS) and Thr-66. The Proton acceptor role is filled by Lys-70. 2 residues coordinate shikimate: Asn-91 and Asp-107. NADP(+)-binding positions include 131 to 135 (GAGGA) and Met-218. Position 220 (Tyr-220) interacts with shikimate. Gly-242 is an NADP(+) binding site.

The protein belongs to the shikimate dehydrogenase family. As to quaternary structure, homodimer.

The enzyme catalyses shikimate + NADP(+) = 3-dehydroshikimate + NADPH + H(+). It participates in metabolic intermediate biosynthesis; chorismate biosynthesis; chorismate from D-erythrose 4-phosphate and phosphoenolpyruvate: step 4/7. In terms of biological role, involved in the biosynthesis of the chorismate, which leads to the biosynthesis of aromatic amino acids. Catalyzes the reversible NADPH linked reduction of 3-dehydroshikimate (DHSA) to yield shikimate (SA). This Buchnera aphidicola subsp. Acyrthosiphon pisum (strain 5A) protein is Shikimate dehydrogenase (NADP(+)).